Reading from the N-terminus, the 98-residue chain is NADH-ubiquinone oxidoreductase chain 4L (98 aa).

3 helical membrane-spanning segments follow: residues 1-21, 29-49, and 61-81; these read MSMVYINIFLAFIMSLMGLLM, SLLCLEGMMLSLFIMMTMVVL, and IILLVFAACEAALGLSLLVMV.

This sequence belongs to the complex I subunit 4L family. In terms of assembly, core subunit of respiratory chain NADH dehydrogenase (Complex I) which is composed of 45 different subunits.

It is found in the mitochondrion inner membrane. The catalysed reaction is a ubiquinone + NADH + 5 H(+)(in) = a ubiquinol + NAD(+) + 4 H(+)(out). Core subunit of the mitochondrial membrane respiratory chain NADH dehydrogenase (Complex I) which catalyzes electron transfer from NADH through the respiratory chain, using ubiquinone as an electron acceptor. Part of the enzyme membrane arm which is embedded in the lipid bilayer and involved in proton translocation. The chain is NADH-ubiquinone oxidoreductase chain 4L (MT-ND4L) from Acinonyx jubatus (Cheetah).